A 337-amino-acid chain; its full sequence is Glyceraldehyde-3-phosphate dehydrogenase, cytosolic (337 aa).

Residues 13–14 (RI), aspartate 35, and arginine 82 contribute to the NAD(+) site. Residues 153-155 (SCT), threonine 184, 213-214 (TG), and arginine 236 each bind D-glyceraldehyde 3-phosphate. The active-site Nucleophile is cysteine 154. Asparagine 318 is a binding site for NAD(+).

It belongs to the glyceraldehyde-3-phosphate dehydrogenase family. Homotetramer.

The protein resides in the cytoplasm. It catalyses the reaction D-glyceraldehyde 3-phosphate + phosphate + NAD(+) = (2R)-3-phospho-glyceroyl phosphate + NADH + H(+). It functions in the pathway carbohydrate degradation; glycolysis; pyruvate from D-glyceraldehyde 3-phosphate: step 1/5. Its function is as follows. Key enzyme in glycolysis that catalyzes the first step of the pathway by converting D-glyceraldehyde 3-phosphate (G3P) into 3-phospho-D-glyceroyl phosphate. Essential for the maintenance of cellular ATP levels and carbohydrate metabolism. The protein is Glyceraldehyde-3-phosphate dehydrogenase, cytosolic (GAPC) of Craterostigma plantagineum (Blue gem).